Consider the following 79-residue polypeptide: Protein S100-G (79 aa).

Ser2 is subject to N-acetylserine. EF-hand domains lie at 13-48 (IFEK…KGPS) and 45-79 (KGPS…KISQ). Ca(2+)-binding residues include Gln26 and Glu31. At Ser42 the chain carries Phosphoserine. Residues Asp58, Asn60, Asp62, Glu64, and Glu69 each coordinate Ca(2+).

It belongs to the S-100 family.

The protein is Protein S100-G (S100G) of Bos taurus (Bovine).